The following is a 354-amino-acid chain: Biotin synthase (354 aa).

The Radical SAM core domain occupies 40 to 258 (NEVQVSTLLS…IAVARILMPR (219 aa)). 3 residues coordinate [4Fe-4S] cluster: Cys-55, Cys-59, and Cys-62. [2Fe-2S] cluster contacts are provided by Cys-99, Cys-130, Cys-190, and Arg-262.

It belongs to the radical SAM superfamily. Biotin synthase family. In terms of assembly, homodimer. The cofactor is [4Fe-4S] cluster. It depends on [2Fe-2S] cluster as a cofactor.

It catalyses the reaction (4R,5S)-dethiobiotin + (sulfur carrier)-SH + 2 reduced [2Fe-2S]-[ferredoxin] + 2 S-adenosyl-L-methionine = (sulfur carrier)-H + biotin + 2 5'-deoxyadenosine + 2 L-methionine + 2 oxidized [2Fe-2S]-[ferredoxin]. It functions in the pathway cofactor biosynthesis; biotin biosynthesis; biotin from 7,8-diaminononanoate: step 2/2. Functionally, catalyzes the conversion of dethiobiotin (DTB) to biotin by the insertion of a sulfur atom into dethiobiotin via a radical-based mechanism. This chain is Biotin synthase, found in Hahella chejuensis (strain KCTC 2396).